The chain runs to 338 residues: Lipoate-protein ligase A (338 aa).

One can recognise a BPL/LPL catalytic domain in the interval 29–216 (PATQRVLFLW…AFFAHYGERV (188 aa)). ATP-binding positions include Arg-71, 76-79 (GAVF), and Lys-134. Position 134 (Lys-134) interacts with (R)-lipoate.

Belongs to the LplA family. Monomer.

It is found in the cytoplasm. The catalysed reaction is L-lysyl-[lipoyl-carrier protein] + (R)-lipoate + ATP = N(6)-[(R)-lipoyl]-L-lysyl-[lipoyl-carrier protein] + AMP + diphosphate + H(+). The protein operates within protein modification; protein lipoylation via exogenous pathway; protein N(6)-(lipoyl)lysine from lipoate: step 1/2. It functions in the pathway protein modification; protein lipoylation via exogenous pathway; protein N(6)-(lipoyl)lysine from lipoate: step 2/2. Functionally, catalyzes both the ATP-dependent activation of exogenously supplied lipoate to lipoyl-AMP and the transfer of the activated lipoyl onto the lipoyl domains of lipoate-dependent enzymes. This Escherichia coli O9:H4 (strain HS) protein is Lipoate-protein ligase A.